The sequence spans 421 residues: POU domain, class 4, transcription factor 1 (421 aa).

A POU-IV box motif is present at residues 57-66; the sequence is RAEALAAVDI. 2 disordered regions span residues 94-117 and 133-200; these read STVPLAHHHHHHHHHQALEPGDLL and GAGA…GLGH. Residues 99-108 show a composition bias toward basic residues; it reads AHHHHHHHHH. Residues 133–186 are compositionally biased toward gly residues; it reads GAGAAGGGGGAHDGPGGGGGPGGGGGPGGGGPGGGGGGGGPGGGGGGPGGGLLG. Residues 262 to 339 form the POU-specific domain; the sequence is DSDTDPRELE…ILQAWLEEAE (78 aa). Positions 357-416 form a DNA-binding region, homeobox; it reads KKRKRTSIAAPEKRSLEAYFAVQPRPSSEKIAAIAEKLDLKKNVVRVWFCNQRQKQKRMK.

Belongs to the POU transcription factor family. Class-4 subfamily. As to quaternary structure, interacts (via N-terminus) with RIT2; the interaction controls POU4F1 transactivation activity on some neuronal target genes. Isoform 1 interacts with POU4F2 isoform 2; this interaction inhibits both POU4F1 DNA-binding and transcriptional activities. Isoform 1 interacts (C-terminus) with ESR1 (via DNA-binding domain); this interaction decreases the estrogen receptor ESR1 transcriptional activity in a DNA- and ligand 17-beta-estradiol-independent manner. As to expression, expressed in mature osteoclasts (at protein level). Brain, peripheral sensory nervous system and retina. In the adult nervous system, predominates in the medial habenula, superficial gray of the superior colliculus, red nucleus, mesencephalic nucleus of the trigeminal ganglion, nucleus ambiguus, inferior olivary nucleus, and peripheral sensory ganglia.

It is found in the nucleus. Its subcellular location is the cytoplasm. In terms of biological role, multifunctional transcription factor with different regions mediating its different effects. Acts by binding (via its C-terminal domain) to sequences related to the consensus octamer motif 5'-ATGCAAAT-3' in the regulatory regions of its target genes. Regulates the expression of specific genes involved in differentiation and survival within a subset of neuronal lineages. It has been shown that activation of some of these genes requires its N-terminal domain, maybe through a neuronal-specific cofactor. Activates BCL2 expression and protects neuronal cells from apoptosis (via the N-terminal domain). Induces neuronal process outgrowth and the coordinate expression of genes encoding synaptic proteins. Exerts its major developmental effects in somatosensory neurons and in brainstem nuclei involved in motor control. Stimulates the binding affinity of the nuclear estrogene receptor ESR1 to DNA estrogen response element (ERE), and hence modulates ESR1-induced transcriptional activity. May positively regulate POU4F2 and POU4F3. Regulates dorsal root ganglion sensory neuron specification and axonal projection into the spinal cord. Plays a role in TNFSF11-mediated terminal osteoclast differentiation. Negatively regulates its own expression interacting directly with a highly conserved autoregulatory domain surrounding the transcription initiation site. Its function is as follows. Able to act as transcription factor, cannot regulate the expression of the same subset of genes than isoform 1. Does not have antiapoptotic effect on neuronal cells. This is POU domain, class 4, transcription factor 1 (Pou4f1) from Mus musculus (Mouse).